An 88-amino-acid chain; its full sequence is MEKMVLRKVVLLAILLSLSCLWVAKALEGESKVSGQVRDETPHTWYCKYDDNCRENCPGCTITKCNYGVCICSNCYHQQSDLGVESHM.

Residues 1–26 (MEKMVLRKVVLLAILLSLSCLWVAKA) form the signal peptide. 3 disulfides stabilise this stretch: cysteine 47/cysteine 65, cysteine 53/cysteine 70, and cysteine 57/cysteine 72.

Belongs to the DEFL family.

The protein localises to the secreted. This is Putative defensin-like protein 264 from Arabidopsis thaliana (Mouse-ear cress).